A 270-amino-acid polypeptide reads, in one-letter code: Large ribosomal subunit protein uL30 (270 aa).

An N-acetylmethionine modification is found at Met-1. 6 tandem repeats follow at residues 7-18, 19-29, 30-40, 41-52, 53-64, and 65-76. The tract at residues 7-76 is 6 X 12 AA tandem repeats; sequence KKKKVATVPG…ARRKLIYEKA (70 aa). Thr-39 carries the post-translational modification Phosphothreonine. Lys-146 bears the N6-acetyllysine mark. Position 149 is an N6-succinyllysine (Lys-149). Phosphotyrosine is present on Tyr-161.

This sequence belongs to the universal ribosomal protein uL30 family. Component of the large ribosomal subunit. Homodimer. Interacts with DHX33.

It localises to the cytoplasm. In terms of biological role, component of the large ribosomal subunit. The ribosome is a large ribonucleoprotein complex responsible for the synthesis of proteins in the cell. Binds to G-rich structures in 28S rRNA and in mRNAs. Plays a regulatory role in the translation apparatus; inhibits cell-free translation of mRNAs. This Mus musculus (Mouse) protein is Large ribosomal subunit protein uL30 (Rpl7).